A 143-amino-acid chain; its full sequence is Large ribosomal subunit protein uL11 (143 aa).

Belongs to the universal ribosomal protein uL11 family. As to quaternary structure, part of the ribosomal stalk of the 50S ribosomal subunit. Interacts with L10 and the large rRNA to form the base of the stalk. L10 forms an elongated spine to which L12 dimers bind in a sequential fashion forming a multimeric L10(L12)X complex. Post-translationally, one or more lysine residues are methylated.

In terms of biological role, forms part of the ribosomal stalk which helps the ribosome interact with GTP-bound translation factors. The protein is Large ribosomal subunit protein uL11 of Burkholderia ambifaria (strain MC40-6).